Reading from the N-terminus, the 719-residue chain is Acyl-coenzyme A oxidase (719 aa).

The short motif at 716–719 (APKI) is the Microbody targeting signal element.

It belongs to the acyl-CoA oxidase family. FAD serves as cofactor.

It localises to the peroxisome. It catalyses the reaction a 2,3-saturated acyl-CoA + O2 = a (2E)-enoyl-CoA + H2O2. It participates in lipid metabolism; peroxisomal fatty acid beta-oxidation. In Komagataella pastoris (Yeast), this protein is Acyl-coenzyme A oxidase (POX1).